Consider the following 127-residue polypeptide: Large ribosomal subunit protein bL12 (127 aa).

It belongs to the bacterial ribosomal protein bL12 family. In terms of assembly, homodimer. Part of the ribosomal stalk of the 50S ribosomal subunit. Forms a multimeric L10(L12)X complex, where L10 forms an elongated spine to which 2 to 4 L12 dimers bind in a sequential fashion. Binds GTP-bound translation factors.

Its function is as follows. Forms part of the ribosomal stalk which helps the ribosome interact with GTP-bound translation factors. Is thus essential for accurate translation. The protein is Large ribosomal subunit protein bL12 of Streptococcus thermophilus (strain CNRZ 1066).